Here is a 463-residue protein sequence, read N- to C-terminus: MAIRQHVGALFTDLYEVTMAQAYWAERMSGTAVFEIFFRKLPPGRSYIMAAGLADVVEFLEAFRFDEQDLRYLRGLGQFSDEFLRWLAGVRFTGDVWAAPEGTVIFPNEPAVQLIAPIIEAQLVETFVLNQIHLQSVLASKAARVVAAARGRPVVDFGARRAHGTDAACKVARTSYLAGAAGTSNLLAARQYGIPTFGTMAHSFVQAFDSEVAAFEAFARLYPATMLLVDTYDTLRGVDHVIELAKRLGNRFDVRAVRLDSGDLDELSKATRARLDTAGLEQVEIFASSGLDENRIAALLAARCPIDGFGVGTQLVVAQDAPALDMAYKLVAYDGSGRTKFSSGKVIYPGRKQVFRKLEHGVFCGDTLGEHGENLPGDPLLVPIMTNGRRIRQHAPTLDGARDWARQQIDALPPELRSLEDTGYSYPVAVSDRIVGELARLRHADTAEAHPGSNVVGAKAKRP.

Position 202 is a phosphohistidine (His202).

This sequence belongs to the NAPRTase family. Post-translationally, transiently phosphorylated on a His residue during the reaction cycle. Phosphorylation strongly increases the affinity for substrates and increases the rate of nicotinate D-ribonucleotide production. Dephosphorylation regenerates the low-affinity form of the enzyme, leading to product release.

The catalysed reaction is nicotinate + 5-phospho-alpha-D-ribose 1-diphosphate + ATP + H2O = nicotinate beta-D-ribonucleotide + ADP + phosphate + diphosphate. It participates in cofactor biosynthesis; NAD(+) biosynthesis; nicotinate D-ribonucleotide from nicotinate: step 1/1. In terms of biological role, involved in the Preiss-Handler pathway, which is a recycling route that permits the salvage of free nicotinamide (NM) and nicotinic acid (Na) involved in the NAD biosynthesis. Catalyzes the synthesis of beta-nicotinate D-ribonucleotide from nicotinate and 5-phospho-D-ribose 1-phosphate at the expense of ATP. It is not able to use nicotinamide. PncB2 appears to be responsible for the increased salvage synthesis of NAD during infection of host tissues. The protein is Nicotinate phosphoribosyltransferase pncB2 (pncB2) of Mycobacterium tuberculosis (strain CDC 1551 / Oshkosh).